Reading from the N-terminus, the 187-residue chain is Methylamine dehydrogenase light chain (187 aa).

The segment at residues 1 to 57 (MKKDTGFDSKIEKLARTTASKTGRRGFIGRLGGFLVGSALLPLLPVDRRSRLGGEVQ) is a signal peptide (tat-type signal). Disulfide bonds link Cys-79–Cys-144, Cys-85–Cys-117, Cys-92–Cys-177, Cys-94–Cys-142, Cys-102–Cys-133, and Cys-134–Cys-165. The residue at position 113 (Trp-113) is a Tryptophylquinone. The segment at residues 113–164 (WVASCYNPGDQQTYLIAYRDCCGKQTCGRCNCVNTQGELPVYRPEFNNDIVW) is a cross-link (tryptophan tryptophylquinone (Trp-Trp)).

The protein belongs to the aromatic amine dehydrogenase light chain family. In terms of assembly, heterotetramer of two light and two heavy chains. Tryptophan tryptophylquinone residue serves as cofactor. In terms of processing, predicted to be exported by the Tat system. The position of the signal peptide cleavage has not been experimentally proven. Tryptophan tryptophylquinone (TTQ) is formed by oxidation of the indole ring of a tryptophan to form tryptophylquinone followed by covalent cross-linking with another tryptophan residue.

It is found in the periplasm. The catalysed reaction is 2 oxidized [amicyanin] + methylamine + H2O = 2 reduced [amicyanin] + formaldehyde + NH4(+) + 2 H(+). Its pathway is one-carbon metabolism; methylamine degradation; formaldehyde from methylamine: step 1/1. Methylamine dehydrogenase carries out the oxidation of methylamine. Electrons are passed from methylamine dehydrogenase to amicyanin. The protein is Methylamine dehydrogenase light chain (mauA) of Methylophilus methylotrophus (Bacterium W3A1).